A 483-amino-acid polypeptide reads, in one-letter code: MAADEVAGGARKATKSKLFEFLVHGVRPGMPSGARMPHQGAPMGPPGSPYMGSPAVRPGLAPAGMEPARKRAAPPPGQSQAQGQGQPVPTAPARSRSAKRRKMADKILPQRIRELVPESQAYMDLLAFERKLDQTIMRKRVDIQEALKRPMKQKRKLRLYISNTFNPAKPDAEDSDGSIASWELRVEGKLLDDPSKQKRKFSSFFKSLVIELDKDLYGPDNHLVEWHRTPTTQETDGFQVKRPGDLSVRCTLLLMLDYQPPQFKLDPRLARLLGLHTQSRSAIVQALWQYVKTNRLQDSHDKEYINGDKYFQQIFDCPRLKFSEIPQRLTALLLPPDPIVINHVISVDPSDQKKTACYDIDVEVEEPLKGQMSSFLLSTANQQEISALDSKIHETIESINQLKIQRDFMLSFSRDPKGYVQDLLRSQSRDLKVMTDVAGNPEEERRAEFYHQPWSQEAVSRYFYCKIQQRRQELEQSLVVRNT.

The residue at position 2 (alanine 2) is an N-acetylalanine. Residues 27-102 (RPGMPSGARM…ARSRSAKRRK (76 aa)) form a disordered region. Low complexity predominate over residues 78–88 (QSQAQGQGQPV). Serine 178 is subject to Phosphoserine. Residues 258 to 335 (YQPPQFKLDP…PQRLTALLLP (78 aa)) form the SWIB/MDM2 domain.

Belongs to the SMARCD family. Component of the multiprotein chromatin-remodeling complexes SWI/SNF: SWI/SNF-A (BAF), SWI/SNF-B (PBAF) and related complexes. The canonical complex contains a catalytic subunit (either SMARCA4/BRG1/BAF190A or SMARCA2/BRM/BAF190B) and at least SMARCE1, ACTL6A/BAF53, SMARCC1/BAF155, SMARCC2/BAF170, and SMARCB1/SNF5/BAF47. Other subunits specific to each of the complexes may also be present permitting several possible combinations developmentally and tissue specific. Component of the BAF complex, which includes at least actin (ACTB), ARID1A/BAF250A, ARID1B/BAF250B, SMARCA2/BRM, SMARCA4/BRG1/BAF190A, ACTL6A/BAF53, ACTL6B/BAF53B, SMARCE1/BAF57, SMARCC1/BAF155, SMARCC2/BAF170, SMARCB1/SNF5/INI1, and one or more SMARCD1/BAF60A, SMARCD2/BAF60B, or SMARCD3/BAF60C. In muscle cells, the BAF complex also contains DPF3. Component of neural progenitors-specific chromatin remodeling complex (npBAF complex) composed of at least, ARID1A/BAF250A or ARID1B/BAF250B, SMARCD1/BAF60A, SMARCD3/BAF60C, SMARCA2/BRM/BAF190B, SMARCA4/BRG1/BAF190A, SMARCB1/BAF47, SMARCC1/BAF155, SMARCE1/BAF57, SMARCC2/BAF170, PHF10/BAF45A, ACTL6A/BAF53A and actin. Component of neuron-specific chromatin remodeling complex (nBAF complex) composed of at least, ARID1A/BAF250A or ARID1B/BAF250B, SMARCD1/BAF60A, SMARCD3/BAF60C, SMARCA2/BRM/BAF190B, SMARCA4/BRG1/BAF190A, SMARCB1/BAF47, SMARCC1/BAF155, SMARCE1/BAF57, SMARCC2/BAF170, DPF1/BAF45B, DPF3/BAF45C, ACTL6B/BAF53B and actin. May be a component of the SWI/SNF-B (PBAF) chromatin remodeling complex, at least composed of SMARCA4/BRG1, SMARCB1/BAF47/SNF5, ACTL6A/BAF53A or ACTL6B/BAF53B, SMARCE1/BAF57, SMARCD1/BAF60A, SMARCD2/BAF60B, perhaps SMARCD3/BAF60C, SMARCC1/BAF155, SMARCC2/BAF170, PBRM1/BAF180, ARID2/BAF200 and actin. Component of SWI/SNF (GBAF) subcomplex, which includes at least BICRA or BICRAL (mutually exclusive), BRD9, SS18, SMARCA2/BRM, SMARCA4/BRG1/BAF190A, ACTL6A/BAF53, SMARCC1/BAF155, and SMARCD1/BAF60A. Interacts with SMARCA4/BRG1/BAF190A. The precise distribution of the related SMARCD1, SMARCD2 and SMARCD3 proteins among these and other SWI/SNF nucleosome-remodeling complexes is not fully known. May allow recruitment of SWI/SNF containing complexes specifically to promoters where these factors are located. Also interacts with several nuclear receptors including PPARG/NR1C3, RXRA/NR1F1, ESR1, NR5A1, NR5A2/LRH1 and other transcriptional activators including the HLH protein SREBF1/SREBP1 and the homeobox protein PBX1. Interacts with PRDM1/BLIMP1. In terms of tissue distribution, ubiquitously expressed.

Its subcellular location is the nucleus. Functionally, involved in transcriptional activation and repression of select genes by chromatin remodeling (alteration of DNA-nucleosome topology). Component of SWI/SNF chromatin remodeling complexes that carry out key enzymatic activities, changing chromatin structure by altering DNA-histone contacts within a nucleosome in an ATP-dependent manner. Stimulates nuclear receptor mediated transcription. Belongs to the neural progenitors-specific chromatin remodeling complex (npBAF complex) and the neuron-specific chromatin remodeling complex (nBAF complex). During neural development a switch from a stem/progenitor to a postmitotic chromatin remodeling mechanism occurs as neurons exit the cell cycle and become committed to their adult state. The transition from proliferating neural stem/progenitor cells to postmitotic neurons requires a switch in subunit composition of the npBAF and nBAF complexes. As neural progenitors exit mitosis and differentiate into neurons, npBAF complexes which contain ACTL6A/BAF53A and PHF10/BAF45A, are exchanged for homologous alternative ACTL6B/BAF53B and DPF1/BAF45B or DPF3/BAF45C subunits in neuron-specific complexes (nBAF). The npBAF complex is essential for the self-renewal/proliferative capacity of the multipotent neural stem cells. The nBAF complex along with CREST plays a role regulating the activity of genes essential for dendrite growth. The chain is SWI/SNF-related matrix-associated actin-dependent regulator of chromatin subfamily D member 3 (Smarcd3) from Mus musculus (Mouse).